A 348-amino-acid polypeptide reads, in one-letter code: Phosphate acyltransferase (348 aa).

This sequence belongs to the PlsX family. Homodimer. Probably interacts with PlsY.

The protein localises to the cytoplasm. It catalyses the reaction a fatty acyl-[ACP] + phosphate = an acyl phosphate + holo-[ACP]. The protein operates within lipid metabolism; phospholipid metabolism. In terms of biological role, catalyzes the reversible formation of acyl-phosphate (acyl-PO(4)) from acyl-[acyl-carrier-protein] (acyl-ACP). This enzyme utilizes acyl-ACP as fatty acyl donor, but not acyl-CoA. The sequence is that of Phosphate acyltransferase from Rhizobium rhizogenes (strain K84 / ATCC BAA-868) (Agrobacterium radiobacter).